Here is a 353-residue protein sequence, read N- to C-terminus: Keratocan (353 aa).

The signal sequence occupies residues 1–21 (MMTLKVCPSLLLLFLVHSVWT). One can recognise an LRRNT domain in the interval 34 to 72 (EHWSHYTFECPQECFCPPSFPNALYCDNKGLKEIPAIPA). Intrachain disulfides connect C43–C49 and C47–C59. LRR repeat units lie at residues 73–94 (RIWY…PFVN), 97–118 (HLRW…SGVL), 123–143 (RLLY…PLPV), 144–165 (GLEQ…VFSN), 168–188 (NLTM…QSDT), 194–214 (SLMQ…SIPA), 215–236 (NTLQ…YFSA), and 239–259 (KVTF…PPNG). N-linked (GlcNAc...) (keratan sulfate) asparagine glycosylation occurs at N94. N-linked (GlcNAc...) asparagine glycosylation is present at N168. N-linked (GlcNAc...) (keratan sulfate) asparagine glycosylation occurs at N223. N261 carries N-linked (GlcNAc...) (keratan sulfate) asparagine glycosylation. LRR repeat units lie at residues 264–283 (SILD…PINA) and 284–305 (HLEH…QICP). An N-linked (GlcNAc...) asparagine glycan is attached at N299. An intrachain disulfide couples C304 to C344.

It belongs to the small leucine-rich proteoglycan (SLRP) family. SLRP class II subfamily. As to expression, cornea.

Its subcellular location is the secreted. It is found in the extracellular space. It localises to the extracellular matrix. Its function is as follows. Plays an important role in generating and maintaining a transparent matrix within the corneal stroma. The chain is Keratocan (KERA) from Coturnix japonica (Japanese quail).